The chain runs to 88 residues: Small ribosomal subunit protein bS20 (88 aa).

The tract at residues Met-1–His-20 is disordered.

It belongs to the bacterial ribosomal protein bS20 family.

Binds directly to 16S ribosomal RNA. The protein is Small ribosomal subunit protein bS20 of Ralstonia pickettii (strain 12J).